The following is a 330-amino-acid chain: Malate dehydrogenase (330 aa).

12 to 18 serves as a coordination point for NAD(+); sequence GAAGQIG. Residues Arg93 and Arg99 each coordinate substrate. Residues Asn106, Gln113, and 130–132 contribute to the NAD(+) site; that span reads VGN. Residues Asn132 and Arg163 each coordinate substrate. The Proton acceptor role is filled by His188.

It belongs to the LDH/MDH superfamily. MDH type 2 family.

It carries out the reaction (S)-malate + NAD(+) = oxaloacetate + NADH + H(+). Its function is as follows. Catalyzes the reversible oxidation of malate to oxaloacetate. The polypeptide is Malate dehydrogenase (Thermobifida fusca (strain YX)).